The chain runs to 69 residues: Toxin Tz2 (69 aa).

A signal peptide spans 1–7 (IEVVMGG). Residues 8–69 (KEGYLLDKSN…KMWDLKTNKC (62 aa)) form the LCN-type CS-alpha/beta domain. Disulfide bonds link C19-C69, C23-C45, C31-C50, and C35-C52.

The protein belongs to the long (4 C-C) scorpion toxin superfamily. Sodium channel inhibitor family. Beta subfamily. Expressed by the venom gland.

The protein localises to the secreted. Functionally, beta toxins bind voltage-independently at site-4 of sodium channels (Nav) and shift the voltage of activation toward more negative potentials thereby affecting sodium channel activation and promoting spontaneous and repetitive firing. The chain is Toxin Tz2 from Tityus zulianus (Venezuelan scorpion).